The sequence spans 340 residues: Phospho-N-acetylmuramoyl-pentapeptide-transferase (340 aa).

A run of 10 helical transmembrane segments spans residues 3–23, 53–73, 79–99, 119–139, 144–164, 176–196, 200–220, 227–247, 250–270, and 315–335; these read MSLI…PHFI, GGTV…FHVF, AYGA…IGFL, MALQ…PSGT, IGGL…FWIV, IDGL…IIAF, ELAI…FFVF, VFMG…ISIA, VEWT…SVML, and VDAF…WMVL.

The protein belongs to the glycosyltransferase 4 family. MraY subfamily. It depends on Mg(2+) as a cofactor.

It localises to the cell membrane. It carries out the reaction UDP-N-acetyl-alpha-D-muramoyl-L-alanyl-gamma-D-glutamyl-L-lysyl-D-alanyl-D-alanine + di-trans,octa-cis-undecaprenyl phosphate = Mur2Ac(oyl-L-Ala-gamma-D-Glu-L-Lys-D-Ala-D-Ala)-di-trans,octa-cis-undecaprenyl diphosphate + UMP. It functions in the pathway cell wall biogenesis; peptidoglycan biosynthesis. Functionally, catalyzes the initial step of the lipid cycle reactions in the biosynthesis of the cell wall peptidoglycan: transfers peptidoglycan precursor phospho-MurNAc-pentapeptide from UDP-MurNAc-pentapeptide onto the lipid carrier undecaprenyl phosphate, yielding undecaprenyl-pyrophosphoryl-MurNAc-pentapeptide, known as lipid I. This is Phospho-N-acetylmuramoyl-pentapeptide-transferase from Streptococcus thermophilus (strain CNRZ 1066).